The chain runs to 629 residues: tRNA uridine 5-carboxymethylaminomethyl modification enzyme MnmG (629 aa).

Residues 13-18, V125, and S180 contribute to the FAD site; that span reads GGGHAG. 273-287 is a binding site for NAD(+); it reads GPRYCPSIEDKVMRF. Position 370 (Q370) interacts with FAD.

Belongs to the MnmG family. As to quaternary structure, homodimer. Heterotetramer of two MnmE and two MnmG subunits. The cofactor is FAD.

Its subcellular location is the cytoplasm. NAD-binding protein involved in the addition of a carboxymethylaminomethyl (cmnm) group at the wobble position (U34) of certain tRNAs, forming tRNA-cmnm(5)s(2)U34. The sequence is that of tRNA uridine 5-carboxymethylaminomethyl modification enzyme MnmG from Shigella dysenteriae serotype 1 (strain Sd197).